Here is a 308-residue protein sequence, read N- to C-terminus: MAVPWEEYFRLALQEKLSTKLPEQAEDHVPPVLRLLEKRQELVDADQALQAQKEVFRTKTAALKQRWEQLEQKERELKGSFIRFDKFLQDSEARRNRALRRAAEERHQAGRREVEALRLWTQLQELRREHARLQRRLKRLEPCARLLEQALELLPGFQEVPELVARFDGLAETQAALRLREREQLAELEAARARLQQLRDAWPDEVLAQGQRRAQLQERLEAARERTLQWESKWIQIQNTAAEKTLLLGRSRMAVLNLFQLVCQHQGQPPTLDIEDTEGQLEHVKLFMQDLSAMLAGLGQAEPAAPAS.

Coiled coils occupy residues 34–143 and 175–233; these read RLLE…LEPC and AALR…WESK.

The protein belongs to the CFAP73 family.

It localises to the cytoplasm. The protein localises to the cytoskeleton. The protein resides in the cilium axoneme. Functionally, may play a role in ciliary/flagellar motility by regulating the assembly and the activity of axonemal inner dynein arm. The sequence is that of Cilia- and flagella-associated protein 73 from Homo sapiens (Human).